The following is a 232-amino-acid chain: Probable proteasome subunit alpha type-5 (232 aa).

It belongs to the peptidase T1A family. The 26S proteasome consists of a 20S proteasome core and two 19S regulatory subunits. The 20S proteasome core is composed of 28 subunits that are arranged in four stacked rings, resulting in a barrel-shaped structure. The two end rings are each formed by seven alpha subunits, and the two central rings are each formed by seven beta subunits. The catalytic chamber with the active sites is on the inside of the barrel.

Its subcellular location is the cytoplasm. It localises to the nucleus. The proteasome degrades poly-ubiquitinated proteins in the cytoplasm and in the nucleus. It is essential for the regulated turnover of proteins and for the removal of misfolded proteins. The proteasome is a multicatalytic proteinase complex that is characterized by its ability to cleave peptides with Arg, Phe, Tyr, Leu, and Glu adjacent to the leaving group at neutral or slightly basic pH. It has an ATP-dependent proteolytic activity. The sequence is that of Probable proteasome subunit alpha type-5 (PUP2) from Encephalitozoon cuniculi (strain GB-M1) (Microsporidian parasite).